The chain runs to 223 residues: Phosphoribosylformylglycinamidine synthase subunit PurQ (223 aa).

A Glutamine amidotransferase type-1 domain is found at 2–223 (KFAVLKFPGS…MVNSWREQNV (222 aa)). Residue C85 is the Nucleophile of the active site. Residues H193 and E195 contribute to the active site.

As to quaternary structure, part of the FGAM synthase complex composed of 1 PurL, 1 PurQ and 2 PurS subunits.

It localises to the cytoplasm. It carries out the reaction N(2)-formyl-N(1)-(5-phospho-beta-D-ribosyl)glycinamide + L-glutamine + ATP + H2O = 2-formamido-N(1)-(5-O-phospho-beta-D-ribosyl)acetamidine + L-glutamate + ADP + phosphate + H(+). It catalyses the reaction L-glutamine + H2O = L-glutamate + NH4(+). It participates in purine metabolism; IMP biosynthesis via de novo pathway; 5-amino-1-(5-phospho-D-ribosyl)imidazole from N(2)-formyl-N(1)-(5-phospho-D-ribosyl)glycinamide: step 1/2. Functionally, part of the phosphoribosylformylglycinamidine synthase complex involved in the purines biosynthetic pathway. Catalyzes the ATP-dependent conversion of formylglycinamide ribonucleotide (FGAR) and glutamine to yield formylglycinamidine ribonucleotide (FGAM) and glutamate. The FGAM synthase complex is composed of three subunits. PurQ produces an ammonia molecule by converting glutamine to glutamate. PurL transfers the ammonia molecule to FGAR to form FGAM in an ATP-dependent manner. PurS interacts with PurQ and PurL and is thought to assist in the transfer of the ammonia molecule from PurQ to PurL. The chain is Phosphoribosylformylglycinamidine synthase subunit PurQ from Staphylococcus saprophyticus subsp. saprophyticus (strain ATCC 15305 / DSM 20229 / NCIMB 8711 / NCTC 7292 / S-41).